A 1240-amino-acid chain; its full sequence is Selection and upkeep of intraepithelial T-cells protein 6 (1240 aa).

Residues 1–24 (MGTIGVPLTAHCVVLFLLQMVALS) form the signal peptide. Residues 25-1086 (TEQFTVNGLE…CNKRNPFWKK (1062 aa)) are Extracellular-facing. The Ig-like V-type domain occupies 26 to 141 (EQFTVNGLES…EEHIIEVKVT (116 aa)). Cys-49 and Cys-123 are disulfide-bonded. An Ig-like C1-type domain is found at 142–231 (ATSSDIQILM…FVTHQEESIS (90 aa)). N-linked (GlcNAc...) asparagine glycans are attached at residues Asn-155, Asn-200, and Asn-314. Cysteines 163 and 217 form a disulfide. The helical transmembrane segment at 1087–1107 (HALDLGISVFAIIVVTLIRHL) threads the bilayer. The Cytoplasmic segment spans residues 1108-1125 (NQREADQHFELDTLWSKD). Residues 1126–1146 (TSVILCVLIMFNNRLKALIYF) traverse the membrane as a helical segment. Residues 1147–1167 (RLYGYSPPGKTYKYIVNYILR) are Extracellular-facing. A helical membrane pass occupies residues 1168-1188 (FSQPLFFIVYSAIILVMHLQI). Topologically, residues 1189-1205 (QNTDSLFSLYNSWMVEM) are cytoplasmic. A helical transmembrane segment spans residues 1206–1226 (IMVLGLLLAIFNVKNIATALL). Residues 1227–1240 (HLGRTTLRLFRIKD) are Extracellular-facing.

This sequence belongs to the SKINT family. As to expression, expressed in skin.

Its subcellular location is the membrane. In terms of biological role, may act by engaging a cell surface molecule on immature T-cells in the embryonic thymus. The sequence is that of Selection and upkeep of intraepithelial T-cells protein 6 (Skint6) from Mus musculus (Mouse).